The following is a 310-amino-acid chain: MRELVRPARLAPGARVAVVAPSGPVPEERLQAGLDVLRGWDLDPVVAPHVLDRHDTFDYLAGTDADRAADLQAAWCDPAVDAVLCARGGYGVQRMADLLDWEAMRAAGPKVFVGFSDITALHEAFATRLGLVTLHGPMAAGIDFIKNARAQEHLRATLFAPETVRVITSGGTPLVPGRARGVTLGGCLALLAADLGTPHARPGARGGLLCLEDVGEETYRIDRYLTQLLRSGWLDGVGGVLLGSWAQCEPYERLRPLLADRLGGLGVPVVEDFGFGHCEGALTVPFGVPAELDADTGTLTLDRPALCSPG.

Serine 116 functions as the Nucleophile in the catalytic mechanism. Residues glutamate 212 and histidine 277 each act as charge relay system in the active site.

This sequence belongs to the peptidase S66 family.

The protein is Putative carboxypeptidase SCO6489 of Streptomyces coelicolor (strain ATCC BAA-471 / A3(2) / M145).